The sequence spans 589 residues: uncharacterized protein (589 aa).

A run of 5 helical transmembrane segments spans residues 11–31 (LNWILTALFWVVLCFSVTMLA), 57–77 (LILMLLVLFIMILLEVRFSVL), 97–117 (FWFFAKLNALLVVAQVIHAIA), 190–210 (IEFTIILWSLSGVLTLFGFNI), and 213–233 (GVVFFIYAFIIFATLMSVWIG). The region spanning 57–357 (LILMLLVLFI…FRLFYEQFTL (301 aa)) is the ABC transmembrane type-1 domain. One can recognise an ABC transporter domain in the interval 390 to 587 (VALKNFGIKD…QLKLDVCLLC (198 aa)). An ATP-binding site is contributed by 423 to 430 (GASGTGKT).

This sequence belongs to the ABC transporter superfamily.

It is found in the cell inner membrane. This is an uncharacterized protein from Haemophilus influenzae (strain ATCC 51907 / DSM 11121 / KW20 / Rd).